Here is a 353-residue protein sequence, read N- to C-terminus: Melanin-concentrating hormone receptor 1 (353 aa).

The disordered stretch occupies residues 1-31 (MDLEASLLPTGPNTSNTSDGPDNLTSAGSPP). Topologically, residues 1–45 (MDLEASLLPTGPNTSNTSDGPDNLTSAGSPPRSGSVSYINIIMPS) are extracellular. Over residues 11–31 (GPNTSNTSDGPDNLTSAGSPP) the composition is skewed to polar residues. Asn-13, Asn-16, and Asn-23 each carry an N-linked (GlcNAc...) asparagine glycan. A helical transmembrane segment spans residues 46-66 (VFGTICLLGIIGNSMVIFAVV). Residues 67 to 79 (KKSKLHWCNNVPD) are Cytoplasmic-facing. The chain crosses the membrane as a helical span at residues 80-100 (IFIINLSVVDLLFLLGMPFMI). Over 101-118 (HQLMGNGVWHFGETMCTL) the chain is Extracellular. Cys-116 and Cys-194 are joined by a disulfide. Residues 119–139 (ITAMDANSQFTSTYILTAMAI) form a helical membrane-spanning segment. Topologically, residues 140–161 (DRYLATVHPISSTKFRKPSVAT) are cytoplasmic. The chain crosses the membrane as a helical span at residues 162–182 (LVICLLWALSFISITPVWLYA). Over 183-204 (RLIPFPGGAVGCGIRLPNPDTD) the chain is Extracellular. A helical membrane pass occupies residues 205–225 (LYWFTLYQFFLAFALPFVVIT). Residues 226 to 257 (AAYVRILQRMTSSVAPASQRSIRLRTKRVTRT) lie on the Cytoplasmic side of the membrane. A helical membrane pass occupies residues 258 to 278 (AIAICLVFFVCWAPYYVLQLT). Over 279–294 (QLSISRPTLTFVYLYN) the chain is Extracellular. Residues 295–315 (AAISLGYANSCLNPFVYIVLC) traverse the membrane as a helical segment. Topologically, residues 316 to 353 (ETFRKRLVLSVKPAAQGQLRAVSNAQTADEERTESKGT) are cytoplasmic.

The protein belongs to the G-protein coupled receptor 1 family. Interacts with NCDN.

It is found in the cell membrane. In terms of biological role, receptor for melanin-concentrating hormone, coupled to both G proteins that inhibit adenylyl cyclase and G proteins that activate phosphoinositide hydrolysis. This Macaca mulatta (Rhesus macaque) protein is Melanin-concentrating hormone receptor 1.